The chain runs to 155 residues: Small ribosomal subunit protein uS7c (155 aa).

The protein belongs to the universal ribosomal protein uS7 family. As to quaternary structure, part of the 30S ribosomal subunit.

It is found in the plastid. The protein resides in the chloroplast. Its function is as follows. One of the primary rRNA binding proteins, it binds directly to 16S rRNA where it nucleates assembly of the head domain of the 30S subunit. This is Small ribosomal subunit protein uS7c (rps7) from Staurastrum punctulatum (Green alga).